The primary structure comprises 153 residues: Transcriptional repressor NrdR (153 aa).

A zinc finger lies at 3–34 (CPYCNADDTKVIDSRLAAEGAQVRRRRQCNQC). One can recognise an ATP-cone domain in the interval 49–139 (PRIIKSNGRI…VYRDFQDIEA (91 aa)).

Belongs to the NrdR family. Zn(2+) serves as cofactor.

In terms of biological role, negatively regulates transcription of bacterial ribonucleotide reductase nrd genes and operons by binding to NrdR-boxes. This is Transcriptional repressor NrdR from Psychrobacter sp. (strain PRwf-1).